Consider the following 1099-residue polypeptide: ATP-dependent helicase/deoxyribonuclease subunit B (1099 aa).

[4Fe-4S] cluster is bound by residues Cys-766, Cys-1056, Cys-1059, and Cys-1065.

It belongs to the helicase family. AddB/RexB type 2 subfamily. Heterodimer of AddA and RexB. Mg(2+) serves as cofactor. It depends on [4Fe-4S] cluster as a cofactor.

Functionally, the heterodimer acts as both an ATP-dependent DNA helicase and an ATP-dependent, dual-direction single-stranded exonuclease. Recognizes the chi site generating a DNA molecule suitable for the initiation of homologous recombination. This subunit has 5' -&gt; 3' nuclease activity but not helicase activity. The polypeptide is ATP-dependent helicase/deoxyribonuclease subunit B (Lactococcus lactis subsp. lactis (strain IL1403) (Streptococcus lactis)).